The sequence spans 1300 residues: Kinesin-like protein KIN-4C (1300 aa).

A Kinesin motor domain is found at 6-360 (CVRVAVNIRP…LKYANRARNI (355 aa)). 85-92 (GQTGSGKT) contributes to the ATP binding site. 3 coiled-coil regions span residues 580-615 (TSVL…LASI), 653-697 (QLMR…RAWK), and 781-823 (EVTV…AKIS). Basic and acidic residues-rich tracts occupy residues 956-971 (ADEN…KQET) and 1001-1013 (EWKP…RESE). Disordered regions lie at residues 956 to 1018 (ADEN…ESVI), 1097 to 1132 (NADG…QQQV), 1144 to 1187 (ALAD…RKKW), and 1200 to 1300 (PALP…TRRV). 4 stretches are compositionally biased toward polar residues: residues 1169 to 1180 (IGNTTGKSNVPR), 1205 to 1222 (THTN…TVDS), 1230 to 1239 (NSDSGESNSI), and 1275 to 1288 (GFVQ…SGSR). The span at 1289–1300 (TSDEKENHTRRV) shows a compositional bias: basic and acidic residues.

This sequence belongs to the TRAFAC class myosin-kinesin ATPase superfamily. Kinesin family. KIN-4 subfamily. In terms of assembly, homodimer.

Kinesin-like motor protein involved in the control of the oriented deposition of cellulose microfibrils. The sequence is that of Kinesin-like protein KIN-4C from Arabidopsis thaliana (Mouse-ear cress).